Here is a 355-residue protein sequence, read N- to C-terminus: MISAAIVGGTGYTGIELIRLLSAHPEVSIDLLTSRSEAGTRADEIFPSLRGISDIVFSDLGDETLATLQQCDVVFFATPHGVAMQQAEALTEAGVKVIDLAADFRLQSLTDFEHWYQQSHACPELLKTAVYGLPEINRDKIANALVVGNPGCYPTTAILGLKPIIEAQNKQSKQLIESRIVIDAKSGVSGAGRQASLALNYAESTDNFKAYSVEGHRHLPEIEQGVAQLLDSQFSHRVRFLPHLVPMIRGMLSSIHMELTDAGALMDWQQVFEQSYASEQFIDVMPKGLYPDTRSVRASNRLRIAVHQDNERAELTVIVVQDNLVKGAAGQAVQNMNVMFGFDESLGLNFAPIVP.

The active site involves C152.

This sequence belongs to the NAGSA dehydrogenase family. Type 1 subfamily.

The protein localises to the cytoplasm. It carries out the reaction N-acetyl-L-glutamate 5-semialdehyde + phosphate + NADP(+) = N-acetyl-L-glutamyl 5-phosphate + NADPH + H(+). The protein operates within amino-acid biosynthesis; L-arginine biosynthesis; N(2)-acetyl-L-ornithine from L-glutamate: step 3/4. In terms of biological role, catalyzes the NADPH-dependent reduction of N-acetyl-5-glutamyl phosphate to yield N-acetyl-L-glutamate 5-semialdehyde. The chain is N-acetyl-gamma-glutamyl-phosphate reductase from Psychrobacter arcticus (strain DSM 17307 / VKM B-2377 / 273-4).